Reading from the N-terminus, the 299-residue chain is Coenzyme PQQ synthesis protein B (299 aa).

Belongs to the PqqB family.

Its pathway is cofactor biosynthesis; pyrroloquinoline quinone biosynthesis. May be involved in the transport of PQQ or its precursor to the periplasm. This Xanthomonas euvesicatoria pv. vesicatoria (strain 85-10) (Xanthomonas campestris pv. vesicatoria) protein is Coenzyme PQQ synthesis protein B.